The chain runs to 192 residues: Phosphoheptose isomerase (192 aa).

Residues 37–192 (LADSFKAGGK…IQLIEKEMVK (156 aa)) enclose the SIS domain. 52–54 (NGG) lines the substrate pocket. 2 residues coordinate Zn(2+): His61 and Glu65. Substrate is bound by residues Glu65, 93–94 (ND), 119–121 (STS), Ser124, and Gln172. Residues Gln172 and His180 each coordinate Zn(2+).

Belongs to the SIS family. GmhA subfamily. Homotetramer. It depends on Zn(2+) as a cofactor.

Its subcellular location is the cytoplasm. The catalysed reaction is 2 D-sedoheptulose 7-phosphate = D-glycero-alpha-D-manno-heptose 7-phosphate + D-glycero-beta-D-manno-heptose 7-phosphate. The protein operates within carbohydrate biosynthesis; D-glycero-D-manno-heptose 7-phosphate biosynthesis; D-glycero-alpha-D-manno-heptose 7-phosphate and D-glycero-beta-D-manno-heptose 7-phosphate from sedoheptulose 7-phosphate: step 1/1. Its function is as follows. Catalyzes the isomerization of sedoheptulose 7-phosphate in D-glycero-D-manno-heptose 7-phosphate. This is Phosphoheptose isomerase from Salmonella dublin (strain CT_02021853).